We begin with the raw amino-acid sequence, 309 residues long: UDP-N-acetylenolpyruvoylglucosamine reductase (309 aa).

One can recognise an FAD-binding PCMH-type domain in the interval 33–195; sequence VGGQAETLFR…VRARLRTRPG (163 aa). The active site involves Arg-175. Ser-224 functions as the Proton donor in the catalytic mechanism. Residue Glu-294 is part of the active site.

It belongs to the MurB family. FAD serves as cofactor.

Its subcellular location is the cytoplasm. The enzyme catalyses UDP-N-acetyl-alpha-D-muramate + NADP(+) = UDP-N-acetyl-3-O-(1-carboxyvinyl)-alpha-D-glucosamine + NADPH + H(+). It functions in the pathway cell wall biogenesis; peptidoglycan biosynthesis. Functionally, cell wall formation. In Granulibacter bethesdensis (strain ATCC BAA-1260 / CGDNIH1), this protein is UDP-N-acetylenolpyruvoylglucosamine reductase.